The primary structure comprises 276 residues: MPELPEVENVRRTLENLVTGKTIEDVIVTYPKIVKRPDDAKIFKEMLKGETIENIKRRGKFLLLYVTNYVIVSHLRMEGKFLLHQEDEPIDKHTHVRFLFTDGTELHYKDVRKFGTMHLFKKGEEMNQMPLADLGPEPFDAELTPQYLQERLQKTNRKIKVVLLDQRLLVGLGNIYVDEVLFRSQIHPEREASSLTAEEIERIYEATVTTLGEAVKRGGSTIRTYINSQGQIGSFQELLNVYGKKGEPCVTCGTILEKTVVGGRGTHYCPICQPRI.

The active-site Schiff-base intermediate with DNA is the Pro-2. The Proton donor role is filled by Glu-3. Lys-60 functions as the Proton donor; for beta-elimination activity in the catalytic mechanism. Residues His-93 and Arg-112 each contribute to the DNA site. Residues 240 to 274 (NVYGKKGEPCVTCGTILEKTVVGGRGTHYCPICQP) form an FPG-type zinc finger. Arg-264 functions as the Proton donor; for delta-elimination activity in the catalytic mechanism.

Belongs to the FPG family. In terms of assembly, monomer. Requires Zn(2+) as cofactor.

The catalysed reaction is Hydrolysis of DNA containing ring-opened 7-methylguanine residues, releasing 2,6-diamino-4-hydroxy-5-(N-methyl)formamidopyrimidine.. The enzyme catalyses 2'-deoxyribonucleotide-(2'-deoxyribose 5'-phosphate)-2'-deoxyribonucleotide-DNA = a 3'-end 2'-deoxyribonucleotide-(2,3-dehydro-2,3-deoxyribose 5'-phosphate)-DNA + a 5'-end 5'-phospho-2'-deoxyribonucleoside-DNA + H(+). Involved in base excision repair of DNA damaged by oxidation or by mutagenic agents. Acts as a DNA glycosylase that recognizes and removes damaged bases. Has a preference for oxidized purines, such as 7,8-dihydro-8-oxoguanine (8-oxoG). Has AP (apurinic/apyrimidinic) lyase activity and introduces nicks in the DNA strand. Cleaves the DNA backbone by beta-delta elimination to generate a single-strand break at the site of the removed base with both 3'- and 5'-phosphates. This is Formamidopyrimidine-DNA glycosylase from Bacillus cereus (strain ATCC 10987 / NRS 248).